The chain runs to 314 residues: Olfactory receptor 52K1 (314 aa).

Over 1 to 27 (MLPSNITSTHPAVFLLVGIPGLEHLHA) the chain is Extracellular. The N-linked (GlcNAc...) asparagine glycan is linked to asparagine 5. Residues 28–48 (WISIPFCFAYTLALLGNCTLL) form a helical membrane-spanning segment. Residues 49–56 (FIIQADAA) are Cytoplasmic-facing. Residues 57–77 (LHEPMYLFLAMLATIDLVLSS) traverse the membrane as a helical segment. Residues 78–101 (TTLPKMLAIFWFRDQEINFFACLV) are Extracellular-facing. A disulfide bridge links cysteine 99 with cysteine 191. The chain crosses the membrane as a helical span at residues 102–122 (QMFFLHSFSIMESAVLLAMAF). The Cytoplasmic segment spans residues 123 to 141 (DRYVAICKPLHYTTVLTGS). The chain crosses the membrane as a helical span at residues 142 to 162 (LITKIGMAAVARAVTLMTPLP). At 163-198 (FLLRRFHYCRGPVIAHCYCEHMAVVRLACGDTSFNN) the chain is on the extracellular side. Residues 199 to 219 (IYGIAVAMFIVVLDLLFVILS) form a helical membrane-spanning segment. Residues 220–239 (YVFILQAVLQLASQEARYKA) are Cytoplasmic-facing. Residues 240 to 260 (FGTCVSHIGAILSTYTPVVIS) traverse the membrane as a helical segment. Topologically, residues 261–275 (SVMHRVARHAAPRVH) are extracellular. A helical membrane pass occupies residues 276 to 296 (ILLAIFYLLFPPMVNPIIYGV). At 297–314 (KTKQIREYVLSLFQRKNM) the chain is on the cytoplasmic side.

Belongs to the G-protein coupled receptor 1 family.

The protein resides in the cell membrane. Functionally, odorant receptor. This Homo sapiens (Human) protein is Olfactory receptor 52K1 (OR52K1).